The chain runs to 364 residues: B3 domain-containing protein At5g38490 (364 aa).

The interval 148–202 (ASTSSSSLLNLPCLEPSTETKDVPNPNYQSSSPSSCLTGKTNRKRRAVEQRKSGK) is disordered. The segment at residues 260–364 (FQKLIRNDFL…GVLCFALDTE (105 aa)) is a DNA-binding region (TF-B3).

The protein localises to the nucleus. The sequence is that of B3 domain-containing protein At5g38490 from Arabidopsis thaliana (Mouse-ear cress).